The primary structure comprises 3473 residues: AP2/ERF domain-containing protein PFD0985w (3473 aa).

Disordered regions lie at residues 35–61, 366–450, 647–704, 750–801, 1096–1196, 1300–1328, 1388–1418, 1773–1807, and 1864–1898; these read NNII…NNNN, KMER…HLVC, NNNN…INAK, NIIK…RKKK, VDNN…MNMN, DNTS…NSRG, HLRS…GAER, NNTG…NNKV, and IGED…NNLS. Low complexity-rich tracts occupy residues 44–61, 396–442, and 647–666; these read NGHN…NNNN, NNND…NSNN, and NNNN…NNNN. The span at 683-694 shows a compositional bias: basic and acidic residues; the sequence is TGDKHETSKKED. Residues 751 to 768 are compositionally biased toward low complexity; the sequence is IIKSDNVNNNNNNNNNNN. Positions 785–801 are enriched in basic residues; that stretch reads NKKHKKKNIHDNNRKKK. Residues 1098–1156 are compositionally biased toward low complexity; sequence NNNNNNNNNNNNNVNNISNNGTNLEENANNANNANNPNNANNPNNANNSNNADYVNDYN. A compositionally biased stretch (acidic residues) spans 1160-1171; it reads KEEDDDDEEEDN. The span at 1182–1196 shows a compositional bias: low complexity; sequence TNYNININGENMNMN. Composition is skewed to polar residues over residues 1314-1326 and 1390-1412; these read VGSN…NNNS and RSSN…SSMR. The segment covering 1773–1805 has biased composition (low complexity); that stretch reads NNTGTTQNNNKYGTNSNNNNNNNNNNNNNNNNN. Positions 1881-1893 are enriched in basic residues; it reads LKRRKNGNSKRAK. A DNA-binding region (AP2/ERF 1) is located at residues 1957–2011; the sequence is PLPTGVYFDSARKLWRCQWKENGKFKTKGFSLIHYSTLEEARKQCILYRCDVGNI. Disordered regions lie at residues 2068 to 2088, 2319 to 2343, 2387 to 2470, 2520 to 2584, 2609 to 2677, 2840 to 2860, 2881 to 2902, and 2937 to 2960; these read EKTG…NVNN, QVDV…SNSK, TNDN…NIRS, LGNG…NYNN, LYGK…PASN, MNNN…NNVK, NDKL…SSSP, and KYVE…KKDE. Positions 2333 to 2342 are enriched in basic residues; it reads KRSKRSKSNS. 2 stretches are compositionally biased toward low complexity: residues 2388 to 2400 and 2409 to 2460; these read NDNN…NNND and DNNN…NNND. Acidic residues predominate over residues 2525–2542; the sequence is DGEEEGGGDYDEKEDDLL. Composition is skewed to low complexity over residues 2557-2584 and 2615-2624; these read NNNN…NYNN and NNNNNNNNNN. Positions 2663-2675 are enriched in polar residues; it reads LLNSQVNESSAPA. Over residues 2841–2858 the composition is skewed to low complexity; it reads NNNNNNNNNNNNNNNNNN. Residues 2943–2953 show a composition bias toward basic and acidic residues; sequence NGDKETNDYNT. The AP2/ERF 2 DNA-binding region spans 3268–3321; sequence SLPKGIYYDHAKKLYRVQYIINNSIKTKGFSVKKLGLAQAKIEAESFRNFCLEN. Over residues 3369–3391 the composition is skewed to low complexity; the sequence is KMSINNDGNNNDGNNNDGNNNDD. Residues 3369–3473 form a disordered region; sequence KMSINNDGNN…NNDNEMSQNE (105 aa). Residues 3392 to 3403 show a composition bias toward acidic residues; the sequence is NNNDDNNNDDNN. The segment covering 3404–3457 has biased composition (low complexity); sequence NDGNNNDDNNNEGINNDDNNNEGINNDDNNNEGINNNDDNNNNDDNNNEGINND.

Its subcellular location is the nucleus. This chain is AP2/ERF domain-containing protein PFD0985w, found in Plasmodium falciparum (isolate 3D7).